A 387-amino-acid polypeptide reads, in one-letter code: 1-deoxy-D-xylulose 5-phosphate reductoisomerase (387 aa).

NADPH contacts are provided by Thr11, Gly12, Ser13, Ile14, Gly37, Arg39, and Asn123. A 1-deoxy-D-xylulose 5-phosphate-binding site is contributed by Lys124. Glu125 serves as a coordination point for NADPH. Asp147 lines the Mn(2+) pocket. The 1-deoxy-D-xylulose 5-phosphate site is built by Ser148, Glu149, Ser173, and His196. Position 149 (Glu149) interacts with Mn(2+). Gly202 contacts NADPH. 4 residues coordinate 1-deoxy-D-xylulose 5-phosphate: Ser209, Asn214, Lys215, and Glu218. Glu218 contributes to the Mn(2+) binding site.

It belongs to the DXR family. The cofactor is Mg(2+). Mn(2+) is required as a cofactor.

It catalyses the reaction 2-C-methyl-D-erythritol 4-phosphate + NADP(+) = 1-deoxy-D-xylulose 5-phosphate + NADPH + H(+). It functions in the pathway isoprenoid biosynthesis; isopentenyl diphosphate biosynthesis via DXP pathway; isopentenyl diphosphate from 1-deoxy-D-xylulose 5-phosphate: step 1/6. In terms of biological role, catalyzes the NADPH-dependent rearrangement and reduction of 1-deoxy-D-xylulose-5-phosphate (DXP) to 2-C-methyl-D-erythritol 4-phosphate (MEP). This chain is 1-deoxy-D-xylulose 5-phosphate reductoisomerase, found in Corynebacterium diphtheriae (strain ATCC 700971 / NCTC 13129 / Biotype gravis).